Here is a 297-residue protein sequence, read N- to C-terminus: Undecaprenyl-diphosphatase (297 aa).

Transmembrane regions (helical) follow at residues 39–59, 85–105, 113–133, 151–171, 190–210, 220–240, and 249–269; these read PGAAYSAVIQLGTVAAVLIYF, ARLAWFVLVGTLPVGIAGLTL, FRSLYVISGSLIVLALILLVV, GILIGMWQALALIPGASRSGT, SFLLSIPATTLAGVFELKHLL, ALWVGTLVAFASGMAAIAWLL, and LVFVVYRVALGVLLLVLLQTG.

The protein belongs to the UppP family.

It is found in the cell inner membrane. The catalysed reaction is di-trans,octa-cis-undecaprenyl diphosphate + H2O = di-trans,octa-cis-undecaprenyl phosphate + phosphate + H(+). Its function is as follows. Catalyzes the dephosphorylation of undecaprenyl diphosphate (UPP). Confers resistance to bacitracin. The polypeptide is Undecaprenyl-diphosphatase (Myxococcus xanthus (strain DK1622)).